The following is a 159-amino-acid chain: ATP synthase subunit b (159 aa).

The chain crosses the membrane as a helical span at residues 7–27 (DFIWTLINFFVLLFILKILLY).

It belongs to the ATPase B chain family. In terms of assembly, F-type ATPases have 2 components, F(1) - the catalytic core - and F(0) - the membrane proton channel. F(1) has five subunits: alpha(3), beta(3), gamma(1), delta(1), epsilon(1). F(0) has three main subunits: a(1), b(2) and c(10-14). The alpha and beta chains form an alternating ring which encloses part of the gamma chain. F(1) is attached to F(0) by a central stalk formed by the gamma and epsilon chains, while a peripheral stalk is formed by the delta and b chains.

It localises to the cell membrane. Functionally, f(1)F(0) ATP synthase produces ATP from ADP in the presence of a proton or sodium gradient. F-type ATPases consist of two structural domains, F(1) containing the extramembraneous catalytic core and F(0) containing the membrane proton channel, linked together by a central stalk and a peripheral stalk. During catalysis, ATP synthesis in the catalytic domain of F(1) is coupled via a rotary mechanism of the central stalk subunits to proton translocation. Its function is as follows. Component of the F(0) channel, it forms part of the peripheral stalk, linking F(1) to F(0). In Carboxydothermus hydrogenoformans (strain ATCC BAA-161 / DSM 6008 / Z-2901), this protein is ATP synthase subunit b.